Consider the following 243-residue polypeptide: Small ribosomal subunit protein uS5 (243 aa).

Positions 1–54 (MSDNEKETQVAEETQNTQATAESSNNDERRGRRNNRGGEGRRGDRRGRREDNHE) are disordered. The span at 11 to 24 (AEETQNTQATAESS) shows a compositional bias: polar residues. Residues 26–54 (NDERRGRRNNRGGEGRRGDRRGRREDNHE) are compositionally biased toward basic and acidic residues. In terms of domain architecture, S5 DRBM spans 57–120 (MLDRVVTINR…LDAKKHLFNV (64 aa)).

It belongs to the universal ribosomal protein uS5 family. As to quaternary structure, part of the 30S ribosomal subunit. Contacts proteins S4 and S8.

In terms of biological role, with S4 and S12 plays an important role in translational accuracy. Functionally, located at the back of the 30S subunit body where it stabilizes the conformation of the head with respect to the body. The sequence is that of Small ribosomal subunit protein uS5 from Bifidobacterium animalis subsp. lactis (strain AD011).